We begin with the raw amino-acid sequence, 59 residues long: Large ribosomal subunit protein bL32 (59 aa).

Belongs to the bacterial ribosomal protein bL32 family.

This Synechococcus sp. (strain RCC307) protein is Large ribosomal subunit protein bL32.